Here is a 514-residue protein sequence, read N- to C-terminus: Na(+)/H(+) antiporter NhaB (514 aa).

The next 12 membrane-spanning stretches (helical) occupy residues 23-43 (LALLVFLIVNPFIFLANPFVA), 63-83 (PLLPGGLLAIEAVIIGMTSAA), 97-117 (LLLMFMVAGIYFMKQLLLFIF), 120-140 (LLLSIRSKMVLSLAFCVAAAF), 144-164 (FLDALTVVAVVISVAVGFYGI), 202-222 (LMMHAGVGTALGGVMTMVGEP), 238-258 (FFLRMSPVTVPVLVCGLLTCM), 303-323 (AVIGVWLVTALALHLAEVGLI), 357-377 (LTVFFSIVAVIIDQHLFAPII), 391-411 (LFYLFNGLLSSISDNVFVGTI), 447-467 (ATPNGQAAFLFLLTSALAPLI), and 475-495 (VWMALPYTIVLTLIGLLCVEF).

It belongs to the NhaB Na(+)/H(+) (TC 2.A.34) antiporter family.

It localises to the cell inner membrane. It catalyses the reaction 2 Na(+)(in) + 3 H(+)(out) = 2 Na(+)(out) + 3 H(+)(in). Functionally, na(+)/H(+) antiporter that extrudes sodium in exchange for external protons. The chain is Na(+)/H(+) antiporter NhaB from Salmonella agona (strain SL483).